A 239-amino-acid polypeptide reads, in one-letter code: Protein GrpE (239 aa).

Disordered stretches follow at residues 1–56 and 208–239; these read MIEN…KNTI and SMGP…SEDV. The segment covering 40 to 53 has biased composition (basic and acidic residues); it reads TSQKKEAINTEELK. The segment covering 224–239 has biased composition (acidic residues); that stretch reads TVEEDVNSEVNTSEDV.

This sequence belongs to the GrpE family. In terms of assembly, homodimer.

It localises to the cytoplasm. Participates actively in the response to hyperosmotic and heat shock by preventing the aggregation of stress-denatured proteins, in association with DnaK and GrpE. It is the nucleotide exchange factor for DnaK and may function as a thermosensor. Unfolded proteins bind initially to DnaJ; upon interaction with the DnaJ-bound protein, DnaK hydrolyzes its bound ATP, resulting in the formation of a stable complex. GrpE releases ADP from DnaK; ATP binding to DnaK triggers the release of the substrate protein, thus completing the reaction cycle. Several rounds of ATP-dependent interactions between DnaJ, DnaK and GrpE are required for fully efficient folding. The protein is Protein GrpE of Prochlorococcus marinus (strain MIT 9215).